The following is a 142-amino-acid chain: Mediator of RNA polymerase II transcription subunit 9 (142 aa).

A disordered region spans residues Met1–Asn58. Residue Ala2 is modified to N-acetylalanine. The span at Gln17 to Gln49 shows a compositional bias: pro residues. The stretch at Asp78–Leu134 forms a coiled coil. Residue Ser106 is modified to Phosphoserine.

The protein belongs to the Mediator complex subunit 9 family. As to quaternary structure, component of the Mediator complex, which is composed of MED1, MED4, MED6, MED7, MED8, MED9, MED10, MED11, MED12, MED13, MED13L, MED14, MED15, MED16, MED17, MED18, MED19, MED20, MED21, MED22, MED23, MED24, MED25, MED26, MED27, MED29, MED30, MED31, CCNC, CDK8 and CDC2L6/CDK11. The MED12, MED13, CCNC and CDK8 subunits form a distinct module termed the CDK8 module. Mediator containing the CDK8 module is less active than Mediator lacking this module in supporting transcriptional activation. Individual preparations of the Mediator complex lacking one or more distinct subunits have been variously termed ARC, CRSP, DRIP, PC2, SMCC and TRAP.

The protein localises to the nucleus. Its function is as follows. Component of the Mediator complex, a coactivator involved in the regulated transcription of nearly all RNA polymerase II-dependent genes. Mediator functions as a bridge to convey information from gene-specific regulatory proteins to the basal RNA polymerase II transcription machinery. Mediator is recruited to promoters by direct interactions with regulatory proteins and serves as a scaffold for the assembly of a functional preinitiation complex with RNA polymerase II and the general transcription factors. The polypeptide is Mediator of RNA polymerase II transcription subunit 9 (Med9) (Mus musculus (Mouse)).